Here is a 95-residue protein sequence, read N- to C-terminus: Small ribosomal subunit protein bS18 (95 aa).

The protein belongs to the bacterial ribosomal protein bS18 family. As to quaternary structure, part of the 30S ribosomal subunit. Forms a tight heterodimer with protein bS6.

In terms of biological role, binds as a heterodimer with protein bS6 to the central domain of the 16S rRNA, where it helps stabilize the platform of the 30S subunit. The protein is Small ribosomal subunit protein bS18 of Rickettsia typhi (strain ATCC VR-144 / Wilmington).